A 112-amino-acid chain; its full sequence is Large ribosomal subunit protein uL22 (112 aa).

It belongs to the universal ribosomal protein uL22 family. As to quaternary structure, part of the 50S ribosomal subunit.

This protein binds specifically to 23S rRNA; its binding is stimulated by other ribosomal proteins, e.g. L4, L17, and L20. It is important during the early stages of 50S assembly. It makes multiple contacts with different domains of the 23S rRNA in the assembled 50S subunit and ribosome. In terms of biological role, the globular domain of the protein is located near the polypeptide exit tunnel on the outside of the subunit, while an extended beta-hairpin is found that lines the wall of the exit tunnel in the center of the 70S ribosome. The polypeptide is Large ribosomal subunit protein uL22 (Nitratidesulfovibrio vulgaris (strain DSM 19637 / Miyazaki F) (Desulfovibrio vulgaris)).